The following is a 430-amino-acid chain: MSTNTDDTTRTDGTFGDYGGQYVPEVLMPAVEELTDAYERYVLDNEDGFVDDFRQRIRSFGGRPTPLTHAPTLSQRHGVDVYLKREDLLHGGAHKLNNALGQVLLAKYMGKDRIVAETGAGQHGTATAMACAALEMPCEIYMGRTDVNRQRPNVFRMRLHDADVNPVTVGSGTLKEAINETMRDWATNVADTHYVIGSVVGPHPFPSMVRDFQAIISEELRAQSREQLGELPAAVIACAGGGSNTMGAFGAFVGSASLPGAPAGTHEPAPDVDLLAVEAGGSRLGVDDDAGYAPNSASLSTGTEGVLHGARTKLLQTETGQIVESHSVSAGLDYAGVGPELAHLVDTGRITPTNVDDDAALAAFHRLSRDEGVIPALETSHAVAALDQYDGDGPVVVNVSGRGDKDLDTVIEASAANDIDAAPDMEVFEQ.

Residue Lys95 is modified to N6-(pyridoxal phosphate)lysine.

The protein belongs to the TrpB family. In terms of assembly, tetramer of two alpha and two beta chains. Pyridoxal 5'-phosphate is required as a cofactor.

It catalyses the reaction (1S,2R)-1-C-(indol-3-yl)glycerol 3-phosphate + L-serine = D-glyceraldehyde 3-phosphate + L-tryptophan + H2O. Its pathway is amino-acid biosynthesis; L-tryptophan biosynthesis; L-tryptophan from chorismate: step 5/5. Functionally, the beta subunit is responsible for the synthesis of L-tryptophan from indole and L-serine. The chain is Tryptophan synthase beta chain from Halobacterium salinarum (strain ATCC 29341 / DSM 671 / R1).